We begin with the raw amino-acid sequence, 384 residues long: Carbamoyl phosphate synthase small chain (384 aa).

Positions 1 to 195 (MLPVLPPALL…LGRGHGTLAD (195 aa)) are CPSase. Positions 50, 247, and 249 each coordinate L-glutamine. The Glutamine amidotransferase type-1 domain occupies 199 to 384 (HVVAYDFGVK…RFVALMQERA (186 aa)). The active-site Nucleophile is the Cys275. 5 residues coordinate L-glutamine: Leu276, Gln279, Asn317, Gly319, and Phe320. Catalysis depends on residues His359 and Glu361.

This sequence belongs to the CarA family. As to quaternary structure, composed of two chains; the small (or glutamine) chain promotes the hydrolysis of glutamine to ammonia, which is used by the large (or ammonia) chain to synthesize carbamoyl phosphate. Tetramer of heterodimers (alpha,beta)4.

It carries out the reaction hydrogencarbonate + L-glutamine + 2 ATP + H2O = carbamoyl phosphate + L-glutamate + 2 ADP + phosphate + 2 H(+). The enzyme catalyses L-glutamine + H2O = L-glutamate + NH4(+). It participates in amino-acid biosynthesis; L-arginine biosynthesis; carbamoyl phosphate from bicarbonate: step 1/1. Its pathway is pyrimidine metabolism; UMP biosynthesis via de novo pathway; (S)-dihydroorotate from bicarbonate: step 1/3. Functionally, small subunit of the glutamine-dependent carbamoyl phosphate synthetase (CPSase). CPSase catalyzes the formation of carbamoyl phosphate from the ammonia moiety of glutamine, carbonate, and phosphate donated by ATP, constituting the first step of 2 biosynthetic pathways, one leading to arginine and/or urea and the other to pyrimidine nucleotides. The small subunit (glutamine amidotransferase) binds and cleaves glutamine to supply the large subunit with the substrate ammonia. This is Carbamoyl phosphate synthase small chain from Rubrivivax gelatinosus (strain NBRC 100245 / IL144).